Reading from the N-terminus, the 399-residue chain is Tyrosine--tRNA ligase (399 aa).

The 'HIGH' region signature appears at proline 42–histidine 51. The 'KMSKS' region motif lies at lysine 226–serine 230. Lysine 229 is a binding site for ATP. An S4 RNA-binding domain is found at methionine 336–leucine 396.

The protein belongs to the class-I aminoacyl-tRNA synthetase family. TyrS type 2 subfamily. Homodimer.

The protein resides in the cytoplasm. It catalyses the reaction tRNA(Tyr) + L-tyrosine + ATP = L-tyrosyl-tRNA(Tyr) + AMP + diphosphate + H(+). In terms of biological role, catalyzes the attachment of tyrosine to tRNA(Tyr) in a two-step reaction: tyrosine is first activated by ATP to form Tyr-AMP and then transferred to the acceptor end of tRNA(Tyr). The protein is Tyrosine--tRNA ligase of Pseudomonas fluorescens (strain ATCC BAA-477 / NRRL B-23932 / Pf-5).